Here is a 406-residue protein sequence, read N- to C-terminus: Purine nucleoside permease (406 aa).

The N-terminal stretch at 1 to 22 (MKLSTLFTLATTISTLTTFTIA) is a signal peptide.

It belongs to the NUP family.

Mammalian nucleoside transport inhibitors dipyridamole and NBMPR inhibit adenosine transport by NUP. Its function is as follows. Nucleoside permease that transports adenosine and guanosine. Does not show any transport activities towards cytidine, adenine, guanine, uridine, and uracil. In Candida albicans (Yeast), this protein is Purine nucleoside permease.